The chain runs to 1370 residues: DNA-directed RNA polymerase subunit beta (1370 aa).

Belongs to the RNA polymerase beta chain family. The RNAP catalytic core consists of 2 alpha, 1 beta, 1 beta' and 1 omega subunit. When a sigma factor is associated with the core the holoenzyme is formed, which can initiate transcription.

The catalysed reaction is RNA(n) + a ribonucleoside 5'-triphosphate = RNA(n+1) + diphosphate. Functionally, DNA-dependent RNA polymerase catalyzes the transcription of DNA into RNA using the four ribonucleoside triphosphates as substrates. The protein is DNA-directed RNA polymerase subunit beta of Geobacter metallireducens (strain ATCC 53774 / DSM 7210 / GS-15).